Consider the following 353-residue polypeptide: Uroporphyrinogen decarboxylase (353 aa).

Substrate-binding positions include 27-31, F46, D76, Y152, S207, and H321; that span reads RQAGR.

It belongs to the uroporphyrinogen decarboxylase family. Homodimer.

The protein localises to the cytoplasm. The catalysed reaction is uroporphyrinogen III + 4 H(+) = coproporphyrinogen III + 4 CO2. It participates in porphyrin-containing compound metabolism; protoporphyrin-IX biosynthesis; coproporphyrinogen-III from 5-aminolevulinate: step 4/4. Functionally, catalyzes the decarboxylation of four acetate groups of uroporphyrinogen-III to yield coproporphyrinogen-III. This is Uroporphyrinogen decarboxylase from Listeria monocytogenes serotype 4b (strain F2365).